A 205-amino-acid polypeptide reads, in one-letter code: Dephospho-CoA kinase (205 aa).

Positions 4-204 (VVGLTGGIAS…QYYLTLATQQ (201 aa)) constitute a DPCK domain. Position 12–17 (12–17 (ASGKTT)) interacts with ATP.

It belongs to the CoaE family.

It localises to the cytoplasm. The enzyme catalyses 3'-dephospho-CoA + ATP = ADP + CoA + H(+). Its pathway is cofactor biosynthesis; coenzyme A biosynthesis; CoA from (R)-pantothenate: step 5/5. Functionally, catalyzes the phosphorylation of the 3'-hydroxyl group of dephosphocoenzyme A to form coenzyme A. The protein is Dephospho-CoA kinase of Haemophilus ducreyi (strain 35000HP / ATCC 700724).